The chain runs to 130 residues: Small ribosomal subunit protein uS8 (130 aa).

It belongs to the universal ribosomal protein uS8 family. In terms of assembly, part of the 30S ribosomal subunit. Contacts proteins S5 and S12.

Its function is as follows. One of the primary rRNA binding proteins, it binds directly to 16S rRNA central domain where it helps coordinate assembly of the platform of the 30S subunit. The sequence is that of Small ribosomal subunit protein uS8 from Salmonella arizonae (strain ATCC BAA-731 / CDC346-86 / RSK2980).